Here is a 446-residue protein sequence, read N- to C-terminus: N-succinylarginine dihydrolase (446 aa).

Substrate is bound by residues 19–28, asparagine 110, and 137–138; these read AGLSFGNVAS and HR. The active site involves glutamate 174. Residue arginine 213 participates in substrate binding. Residue histidine 249 is part of the active site. Residues aspartate 251 and asparagine 364 each coordinate substrate. The active-site Nucleophile is cysteine 370.

Belongs to the succinylarginine dihydrolase family. As to quaternary structure, homodimer.

The catalysed reaction is N(2)-succinyl-L-arginine + 2 H2O + 2 H(+) = N(2)-succinyl-L-ornithine + 2 NH4(+) + CO2. The protein operates within amino-acid degradation; L-arginine degradation via AST pathway; L-glutamate and succinate from L-arginine: step 2/5. Functionally, catalyzes the hydrolysis of N(2)-succinylarginine into N(2)-succinylornithine, ammonia and CO(2). This chain is N-succinylarginine dihydrolase, found in Burkholderia ambifaria (strain MC40-6).